A 424-amino-acid polypeptide reads, in one-letter code: Serine--tRNA ligase (424 aa).

230 to 232 (TAE) serves as a coordination point for L-serine. An ATP-binding site is contributed by 261 to 263 (RSE). Glu284 contacts L-serine. ATP is bound at residue 348–351 (EISS). An L-serine-binding site is contributed by Ser384.

The protein belongs to the class-II aminoacyl-tRNA synthetase family. Type-1 seryl-tRNA synthetase subfamily. As to quaternary structure, homodimer. The tRNA molecule binds across the dimer.

The protein localises to the cytoplasm. The enzyme catalyses tRNA(Ser) + L-serine + ATP = L-seryl-tRNA(Ser) + AMP + diphosphate + H(+). The catalysed reaction is tRNA(Sec) + L-serine + ATP = L-seryl-tRNA(Sec) + AMP + diphosphate + H(+). Its pathway is aminoacyl-tRNA biosynthesis; selenocysteinyl-tRNA(Sec) biosynthesis; L-seryl-tRNA(Sec) from L-serine and tRNA(Sec): step 1/1. Functionally, catalyzes the attachment of serine to tRNA(Ser). Is also able to aminoacylate tRNA(Sec) with serine, to form the misacylated tRNA L-seryl-tRNA(Sec), which will be further converted into selenocysteinyl-tRNA(Sec). The chain is Serine--tRNA ligase from Streptococcus pneumoniae (strain 70585).